The primary structure comprises 325 residues: Large ribosomal subunit protein uL4m (325 aa).

The tract at residues 113–158 (ASTKTRYEVHGSHKKMSPQKGTGNARRGTRQSPLMKGGGKTFGPKP) is disordered.

It belongs to the universal ribosomal protein uL4 family. As to quaternary structure, component of the mitochondrial large ribosomal subunit (mt-LSU). Mature N.crassa 74S mitochondrial ribosomes consist of a small (37S) and a large (54S) subunit. The 37S small subunit contains a 16S ribosomal RNA (16S mt-rRNA) and 32 different proteins. The 54S large subunit contains a 23S rRNA (23S mt-rRNA) and 42 different proteins.

Its subcellular location is the mitochondrion. In terms of biological role, component of the mitochondrial ribosome (mitoribosome), a dedicated translation machinery responsible for the synthesis of mitochondrial genome-encoded proteins, including at least some of the essential transmembrane subunits of the mitochondrial respiratory chain. The mitoribosomes are attached to the mitochondrial inner membrane and translation products are cotranslationally integrated into the membrane. In Neurospora crassa (strain ATCC 24698 / 74-OR23-1A / CBS 708.71 / DSM 1257 / FGSC 987), this protein is Large ribosomal subunit protein uL4m (yml6).